We begin with the raw amino-acid sequence, 105 residues long: Immunoglobulin lambda-like polypeptide 1 (105 aa).

Positions 1–105 (QPKSDPLVTL…EKSVSPAECS (105 aa)) are c region. The Ig-like C1-type domain occupies 6 to 100 (PLVTLFLPSL…EGNTVEKSVS (95 aa)). Cys27 and Cys86 are disulfide-bonded.

Associates non-covalently with VPREB1A. Interacts with SYNV1/HRD1 (via N-terminus); this interaction leads to increased IGLL1 ubiquitination and degradation in pre-B cells, possibly through a lysosomal, not proteasomal, pathway.

It is found in the endoplasmic reticulum. The protein localises to the secreted. Critical for B-cell development. The sequence is that of Immunoglobulin lambda-like polypeptide 1 (Igll1) from Mus spretus (Western Mediterranean mouse).